Here is a 574-residue protein sequence, read N- to C-terminus: FAD-linked oxidoreductase penH (574 aa).

The first 25 residues, 1–25 (MLPRALTLSALLALLLAIYLALAPA), serve as a signal peptide directing secretion. 5 N-linked (GlcNAc...) asparagine glycosylation sites follow: N48, N107, N193, N368, and N385. The 185-residue stretch at 121–305 (HQGRIPLYAA…VRVTMRTYPD (185 aa)) folds into the FAD-binding PCMH-type domain.

It belongs to the oxygen-dependent FAD-linked oxidoreductase family. FAD is required as a cofactor.

The enzyme catalyses peniprequinolone + A = yaequinolone E + AH2. It participates in secondary metabolite biosynthesis. Its pathway is alkaloid biosynthesis. It functions in the pathway mycotoxin biosynthesis. FAD-linked oxidoreductase; part of the gene cluster that mediates the biosynthesis of penigequinolones, potent insecticidal alkaloids that contain a highly modified 10-carbon prenyl group. The first stage is catalyzed by the nonribosomal peptide synthetase penN that condenses anthranilic acid and O-methyl-L-tyrosine to produce 4'-methoxycyclopeptin. 4'-methoxycyclopeptin is then converted to 4'-methoxydehydrocyclopeptin by the ketoglutarate-dependent dioxygenase penM through dehydrogenation to form a double bond between C-alpha and C-beta of the O-methyltyrosine side chain. PenM also converts its first product methoxydehydrocyclopeptin to 4'-methoxycyclopenin. The following conversion of 4'methoxycyclopenin into 4'-methoxyviridicatin is catalyzed by the cyclopenase penL. 4'-methoxyviridicatin is the precursor of quinolone natural products, and is further converted to quinolinone B. The prenyltransferase penI then catalyzes the canonical Friedel-Crafts alkylation of quinolinone B with dimethylallyl cation to yield dimethylallyl quinolone, which is subjected to FAD-dependent dehydrogenation by the FAD-linked oxidoreductase penH to yield conjugated aryl diene. The delta(3') double bond then serves as the site of the second alkylation with DMAPP catalyzed by the prenyltransferase penG to yield a carbenium ion intermediate, which can be attacked by H(2)O to yield a styrenyl quinolone containing a C3'-hydroxyprenyl chain, or undergo cyclization to yield yaequinolones J1 and J2. The conversion of the styrenyl quinolone into the tetrahydrofuran-containing yaequinolone C is performed by the FAD-dependent monooxygenase penE and involves epoxidation of the terminal C7'-C8' olefin, followed by epoxide ring opening initiated by the C3' hydroxyl group. The predicted cysteine hydrolase penJ acts as an epoxide hydrolase that enhances the rate of the 5-exo-tet cyclization step, increasing the yield of yaequinolone C. PenF catalyzes the cationic rearrangement of the epoxide formed by penE (before ring opening to produce yaequinolone C) into yaequinolone D. Finally, the short-chain dehydrogenase/reductase (SDR)-like reductase penD, catalyzes both the dehydration of yaequinolone D and the reduction of the resulting oxonium to yield penigequinolone. This Penicillium thymicola protein is FAD-linked oxidoreductase penH.